Here is a 285-residue protein sequence, read N- to C-terminus: Elongation factor Ts (285 aa).

The segment at 75–78 (TDFV) is involved in Mg(2+) ion dislocation from EF-Tu.

Belongs to the EF-Ts family.

The protein resides in the cytoplasm. Associates with the EF-Tu.GDP complex and induces the exchange of GDP to GTP. It remains bound to the aminoacyl-tRNA.EF-Tu.GTP complex up to the GTP hydrolysis stage on the ribosome. The sequence is that of Elongation factor Ts from Alcanivorax borkumensis (strain ATCC 700651 / DSM 11573 / NCIMB 13689 / SK2).